A 177-amino-acid chain; its full sequence is GTP-dependent dephospho-CoA kinase (177 aa).

Aspartate 48, valine 49, valine 50, aspartate 67, lysine 69, glutamate 124, and aspartate 147 together coordinate GTP.

This sequence belongs to the GTP-dependent DPCK family.

It catalyses the reaction 3'-dephospho-CoA + GTP = GDP + CoA + H(+). The protein operates within cofactor biosynthesis; coenzyme A biosynthesis. Catalyzes the GTP-dependent phosphorylation of the 3'-hydroxyl group of dephosphocoenzyme A to form coenzyme A (CoA). In Thermococcus onnurineus (strain NA1), this protein is GTP-dependent dephospho-CoA kinase.